Consider the following 880-residue polypeptide: Translation initiation factor IF-2 (880 aa).

Composition is skewed to basic and acidic residues over residues 34–43, 59–69, 82–94, 110–131, 167–181, 230–240, and 248–261; these read HMSSLDDKQV, TEKDSKNSSRK, RRRD…DNRH, NRRE…DLLN, KKVE…EKLE, QKEETKPTRKK, and EVPD…EHSD. The interval 34-297 is disordered; it reads HMSSLDDKQV…KERPLPETLV (264 aa). The segment covering 262 to 275 has biased composition (basic residues); it reads KARRRRNKKNKRIN. The segment covering 276-292 has biased composition (basic and acidic residues); it reads QSKEVKKQPTQRKERPL. The 170-residue stretch at 381–550 folds into the tr-type G domain; it reads KRPPVVTIMG…LLQADVMELK (170 aa). The tract at residues 390–397 is G1; that stretch reads GHVDHGKT. Residue 390-397 coordinates GTP; that stretch reads GHVDHGKT. Positions 415–419 are G2; that stretch reads GITQR. The interval 436-439 is G3; it reads DTPG. GTP-binding positions include 436-440 and 490-493; these read DTPGH and NKID. A G4 region spans residues 490 to 493; that stretch reads NKID. Residues 526-528 form a G5 region; that stretch reads SAK.

This sequence belongs to the TRAFAC class translation factor GTPase superfamily. Classic translation factor GTPase family. IF-2 subfamily.

The protein resides in the cytoplasm. In terms of biological role, one of the essential components for the initiation of protein synthesis. Protects formylmethionyl-tRNA from spontaneous hydrolysis and promotes its binding to the 30S ribosomal subunits. Also involved in the hydrolysis of GTP during the formation of the 70S ribosomal complex. The polypeptide is Translation initiation factor IF-2 (Lactobacillus johnsonii (strain CNCM I-12250 / La1 / NCC 533)).